The primary structure comprises 335 residues: Dye-decolorizing peroxidase (335 aa).

The active-site Proton acceptor is the aspartate 149. Position 222 (histidine 222) interacts with heme. A targeting peptide region spans residues 312-335; sequence LPQAATPTLAAGSLSIGSLKGSPR.

It belongs to the DyP-type peroxidase family. In terms of assembly, homotetramer, presumably also in the encapsulin nanocompartment. The cofactor is heme b.

It localises to the encapsulin nanocompartment. It catalyses the reaction 2 a phenolic donor + H2O2 = 2 a phenolic radical donor + 2 H2O. Functionally, cargo of a type 1 encapsulin nanocompartment in situ; this cargo protects against oxidative stress at low pH. When expressed in the cytoplasm (absence of the encapsulin shell gene) it is almost as protective as the intact nanocompartment; its encapsulation has a modest yet significant effect on protection against oxidative stress at low pH. A heme-dependent peroxidase, it probably does not have deferrochelatase activity. Converts guaiacol and H2O2 to tetraguaiacol, also acts on 2,2'-azino-bis(3-ethylbenzothiazoline-6-sulfonic acid) (ABTS). Retains peroxidase activity when encapsulated but has a reduced set of substrates; acts on ABTS but not guaiacol. This Mycobacterium tuberculosis (strain ATCC 25618 / H37Rv) protein is Dye-decolorizing peroxidase.